A 382-amino-acid polypeptide reads, in one-letter code: Inactive ubiquitin-specific protease 5 (382 aa).

A DUSP domain is found at 16-141; it reads VPAEEERALI…GGPTLPRKAI (126 aa). Residues 323–382 enclose the USP domain; that stretch reads TGLLNLGNTCFMNSAIQCLVHTPEFARYFREDYHREINWQNPLGMVVSTLSTSMALKPYV.

The protein belongs to the peptidase C19 family. As to expression, widely expressed with the highest expression in floral organs.

It is found in the cell membrane. Its function is as follows. Plays an important role in the development of floral organs and chloroplasts. Does not possess deubiquitinating enzyme activity in vitro. The protein is Inactive ubiquitin-specific protease 5 of Oryza sativa subsp. japonica (Rice).